Reading from the N-terminus, the 345-residue chain is Small ribosomal subunit biogenesis GTPase RsgA (345 aa).

The tract at residues Met1–Pro36 is disordered. Residues Gln23–Asp34 show a composition bias toward basic and acidic residues. The region spanning Arg103–Leu273 is the CP-type G domain. GTP-binding positions include Asn159 to Asp162 and Gly213 to Ser221. Zn(2+) contacts are provided by Cys297, Cys302, His304, and Cys310.

The protein belongs to the TRAFAC class YlqF/YawG GTPase family. RsgA subfamily. In terms of assembly, monomer. Associates with 30S ribosomal subunit, binds 16S rRNA. The cofactor is Zn(2+).

The protein localises to the cytoplasm. One of several proteins that assist in the late maturation steps of the functional core of the 30S ribosomal subunit. Helps release RbfA from mature subunits. May play a role in the assembly of ribosomal proteins into the subunit. Circularly permuted GTPase that catalyzes slow GTP hydrolysis, GTPase activity is stimulated by the 30S ribosomal subunit. The protein is Small ribosomal subunit biogenesis GTPase RsgA of Sodalis glossinidius (strain morsitans).